A 419-amino-acid chain; its full sequence is Pregnancy-specific beta-1-glycoprotein 1 (419 aa).

Residues Met-1–Ala-34 form the signal peptide. An Ig-like V-type domain is found at Gln-35–Leu-144. Residues Asn-61, Asn-104, Asn-111, Asn-199, Asn-259, Asn-268, and Asn-303 are each glycosylated (N-linked (GlcNAc...) asparagine). 3 consecutive Ig-like C2-type domains span residues Pro-149–Asn-234, Pro-240–Asn-327, and Pro-335–Thr-410. Cys-169 and Cys-217 are oxidised to a cystine. Disulfide bonds link Cys-262-Cys-310 and Cys-354-Cys-394.

Belongs to the immunoglobulin superfamily. CEA family.

The protein localises to the secreted. The chain is Pregnancy-specific beta-1-glycoprotein 1 (PSG1) from Homo sapiens (Human).